Consider the following 571-residue polypeptide: Putative clathrin assembly protein At2g01600 (571 aa).

The region spanning arginine 24–threonine 161 is the ENTH domain. Disordered stretches follow at residues tyrosine 325–leucine 346 and proline 474–isoleucine 571. Residues glutamate 337 to leucine 346 are compositionally biased toward basic and acidic residues. Over residues glutamine 508–glutamine 522 the composition is skewed to low complexity. Polar residues-rich tracts occupy residues serine 523 to proline 532 and proline 543 to isoleucine 571.

Its subcellular location is the membrane. It localises to the clathrin-coated pit. The protein localises to the golgi apparatus. The protein resides in the cytoplasmic vesicle. It is found in the clathrin-coated vesicle. This is Putative clathrin assembly protein At2g01600 from Arabidopsis thaliana (Mouse-ear cress).